An 84-amino-acid chain; its full sequence is Large ribosomal subunit protein bL27 (84 aa).

Positions 1–20 (MAHKKGGGSTKNGRDSNPKY) are disordered.

This sequence belongs to the bacterial ribosomal protein bL27 family.

The sequence is that of Large ribosomal subunit protein bL27 from Chlorobaculum tepidum (strain ATCC 49652 / DSM 12025 / NBRC 103806 / TLS) (Chlorobium tepidum).